The sequence spans 514 residues: MDVIKKKHWWQSDALKWSVLGLLGLLVGYLVVLMYAQGEYLFAITTLILSSAGLYIFANRKAYAWRYVYPGMAGMGLFVLFPLVCTIAIAFTNYSSTNQLTFERAQEVLLDRSWQAGKTYNFGLYPAGDEWQLALSDGETGKNYLSDAFKFGGEQKLQLKETTAQPEGERANLRVITQNRQALSDITAILPDGNKVMMSSLRQFSGTQPLYTLDGDGTLTNNQSGVKYRPNNQIGFYQSITADGNWGDEKLSPGYTVTTGWKNFTRVFTDEGIQKPFLAIFVWTVVFSLITVFLTVAVGMVLACLVQWEALRGKAVYRVLLILPYAVPSFISILIFKGLFNQSFGEINMMLSALFGVKPAWFSDPTTARTMLIIVNTWLGYPYMMILCMGLLKAIPDDLYEASAMDGAGPFQNFFKITLPLLIKPLTPLMIASFAFNFNNFVLIQLLTNGGPDRLGTTTPAGYTDLLVNYTYRIAFEGGGGQDFGLAAAIATLIFLLVGALAIVNLKATRMKFD.

Residues 1-16 are Cytoplasmic-facing; it reads MDVIKKKHWWQSDALK. The helical transmembrane segment at 17-36 threads the bilayer; it reads WSVLGLLGLLVGYLVVLMYA. Residues 37-39 lie on the Periplasmic side of the membrane; sequence QGE. The helical transmembrane segment at 40 to 58 threads the bilayer; that stretch reads YLFAITTLILSSAGLYIFA. Residues 59–66 lie on the Cytoplasmic side of the membrane; sequence NRKAYAWR. Residues 67 to 92 traverse the membrane as a helical segment; that stretch reads YVYPGMAGMGLFVLFPLVCTIAIAFT. Topologically, residues 93-275 are periplasmic; the sequence is NYSSTNQLTF…RVFTDEGIQK (183 aa). The chain crosses the membrane as a helical span at residues 276-306; it reads PFLAIFVWTVVFSLITVFLTVAVGMVLACLV. Residues 281–505 form the ABC transmembrane type-1 domain; the sequence is FVWTVVFSLI…LLVGALAIVN (225 aa). The Cytoplasmic portion of the chain corresponds to 307–318; the sequence is QWEALRGKAVYR. The helical transmembrane segment at 319–336 threads the bilayer; that stretch reads VLLILPYAVPSFISILIF. Over 337–369 the chain is Periplasmic; that stretch reads KGLFNQSFGEINMMLSALFGVKPAWFSDPTTAR. Residues 370–392 form a helical membrane-spanning segment; that stretch reads TMLIIVNTWLGYPYMMILCMGLL. Over 393-425 the chain is Cytoplasmic; it reads KAIPDDLYEASAMDGAGPFQNFFKITLPLLIKP. The chain crosses the membrane as a helical span at residues 426–452; that stretch reads LTPLMIASFAFNFNNFVLIQLLTNGGP. At 453–483 the chain is on the periplasmic side; it reads DRLGTTTPAGYTDLLVNYTYRIAFEGGGGQD. Residues 484 to 505 traverse the membrane as a helical segment; that stretch reads FGLAAAIATLIFLLVGALAIVN. Topologically, residues 506 to 514 are cytoplasmic; that stretch reads LKATRMKFD.

It belongs to the binding-protein-dependent transport system permease family. MalFG subfamily. As to quaternary structure, the complex is composed of two ATP-binding proteins (MalK), two transmembrane proteins (MalG and MalF) and a solute-binding protein (MalE). Protein stability and stable complex formation require YidC.

It localises to the cell inner membrane. In terms of biological role, part of the ABC transporter complex MalEFGK involved in maltose/maltodextrin import. Probably responsible for the translocation of the substrate across the membrane. In Escherichia coli (strain K12), this protein is Maltose/maltodextrin transport system permease protein MalF.